The sequence spans 45 residues: Non-specific lipid-transfer protein (45 aa).

It belongs to the plant LTP family. In terms of tissue distribution, expressed in pollen.

In terms of biological role, plant non-specific lipid-transfer proteins transfer phospholipids as well as galactolipids across membranes. May play a role in wax or cutin deposition in the cell walls of expanding epidermal cells and certain secretory tissues. This is Non-specific lipid-transfer protein from Broussonetia papyrifera (Paper mulberry).